A 480-amino-acid polypeptide reads, in one-letter code: Glycogen synthase 1 (480 aa).

Lysine 15 lines the ADP-alpha-D-glucose pocket.

It belongs to the glycosyltransferase 1 family. Bacterial/plant glycogen synthase subfamily.

It catalyses the reaction [(1-&gt;4)-alpha-D-glucosyl](n) + ADP-alpha-D-glucose = [(1-&gt;4)-alpha-D-glucosyl](n+1) + ADP + H(+). The protein operates within glycan biosynthesis; glycogen biosynthesis. Synthesizes alpha-1,4-glucan chains using ADP-glucose. The sequence is that of Glycogen synthase 1 (glgA1) from Rhizobium radiobacter (Agrobacterium tumefaciens).